We begin with the raw amino-acid sequence, 314 residues long: Leucotoxin LukE (314 aa).

A signal peptide spans 1–28; it reads MFKKKMLAASLSVGLIAPLASPIQESRA.

This sequence belongs to the aerolysin family. In terms of assembly, toxicity requires sequential binding and synergistic association of a class S and a class F component which form heterooligomeric complexes. LukE (class S) associates with LukD (class F). LukE can also associate with HlgB.

The protein resides in the secreted. Its function is as follows. Part of a bi-component leucotoxin that acts by forming pores in the membrane of the target cells. LukE-LukD is as effective as the Panton-Valentine leucocidin (PVL) for inducing dermonecrosis when injected in the rabbit skin, but not hemolytic and poorly leucotoxic on human blood cells compared to other leucotoxins expressed by S.aureus. This chain is Leucotoxin LukE (lukE), found in Staphylococcus aureus.